The sequence spans 431 residues: Bone morphogenetic protein 7 (431 aa).

Positions 1-29 (MHVRSLRAAAPHSFVALWAPLFLLRSALA) are cleaved as a signal peptide. The propeptide occupies 30–292 (DFSLDNEVHS…ATEVHFRSIR (263 aa)). N-linked (GlcNAc...) asparagine glycans are attached at residues N187, N302, N321, and N372. Residues 291-311 (IRSTGSKQRSQNRSKTPKNQE) form a disordered region. 3 cysteine pairs are disulfide-bonded: C330–C396, C359–C428, and C363–C430.

It belongs to the TGF-beta family. In terms of assembly, homodimer; disulfide-linked. Interacts with SOSTDC1. Interacts with TWSG1. Interacts with FBN1 (via N-terminal domain) and FBN2. Interacts with type I receptor ACVR1. Interacts with type II receptor ACVR2A. Interacts with NOG; this interaction inhibits canonical BMP signaling. Interacts with SCUBE3. Interacts with ERFE; the interaction inhibits BMP-induced transcription of HAMP. Interacts with TGFBR3. Several N-termini starting at positions 293, 300, 315 and 316 have been identified by direct sequencing resulting in secretion of different mature forms. As to expression, expressed in the kidney and bladder. Lower levels seen in the brain.

It localises to the secreted. Functionally, growth factor of the TGF-beta superfamily that plays important role in various biological processes, including embryogenesis, hematopoiesis, neurogenesis and skeletal morphogenesis. Initiates the canonical BMP signaling cascade by associating with type I receptor ACVR1 and type II receptor ACVR2A. Once all three components are bound together in a complex at the cell surface, ACVR2A phosphorylates and activates ACVR1. In turn, ACVR1 propagates signal by phosphorylating SMAD1/5/8 that travel to the nucleus and act as activators and repressors of transcription of target genes. For specific functions such as growth cone collapse in developing spinal neurons and chemotaxis of monocytes, also uses BMPR2 as type II receptor. Can also signal through non-canonical pathways such as P38 MAP kinase signaling cascade that promotes brown adipocyte differentiation through activation of target genes, including members of the SOX family of transcription factors. Promotes the expression of HAMP, this is repressed by its interaction with ERFE. The chain is Bone morphogenetic protein 7 (BMP7) from Homo sapiens (Human).